The sequence spans 891 residues: Translation initiation factor IF-2 (891 aa).

One can recognise a tr-type G domain in the interval 390–559; it reads NRAPIVTIMG…LLQSDMLELK (170 aa). The interval 399-406 is G1; the sequence is GHVDHGKT. 399 to 406 serves as a coordination point for GTP; that stretch reads GHVDHGKT. Residues 424-428 are G2; the sequence is GITQS. Residues 445 to 448 are G3; sequence DTPG. Residues 445 to 449 and 499 to 502 each bind GTP; these read DTPGH and NKID. Residues 499–502 are G4; it reads NKID. The interval 535 to 537 is G5; sequence SAT.

It belongs to the TRAFAC class translation factor GTPase superfamily. Classic translation factor GTPase family. IF-2 subfamily.

Its subcellular location is the cytoplasm. Functionally, one of the essential components for the initiation of protein synthesis. Protects formylmethionyl-tRNA from spontaneous hydrolysis and promotes its binding to the 30S ribosomal subunits. Also involved in the hydrolysis of GTP during the formation of the 70S ribosomal complex. This is Translation initiation factor IF-2 from Blochmanniella pennsylvanica (strain BPEN).